We begin with the raw amino-acid sequence, 296 residues long: GTPase Era (296 aa).

In terms of domain architecture, Era-type G spans 7–174 (RTGFVAIVGR…LEEIAQRLPE (168 aa)). Residues 15-22 (GRPNVGKS) form a G1 region. 15–22 (GRPNVGKS) lines the GTP pocket. Positions 41–45 (QTTRH) are G2. The interval 62-65 (DTPG) is G3. GTP-binding positions include 62–66 (DTPGF) and 123–126 (SKID). A G4 region spans residues 123 to 126 (SKID). A G5 region spans residues 153 to 155 (VSA). One can recognise a KH type-2 domain in the interval 197–281 (VREKIFRLVG…HLEVYIKVRK (85 aa)).

Belongs to the TRAFAC class TrmE-Era-EngA-EngB-Septin-like GTPase superfamily. Era GTPase family. In terms of assembly, monomer.

The protein localises to the cytoplasm. The protein resides in the cell inner membrane. Its function is as follows. An essential GTPase that binds both GDP and GTP, with rapid nucleotide exchange. Plays a role in 16S rRNA processing and 30S ribosomal subunit biogenesis and possibly also in cell cycle regulation and energy metabolism. The sequence is that of GTPase Era from Bordetella avium (strain 197N).